A 416-amino-acid chain; its full sequence is Gamma-glutamyl phosphate reductase (416 aa).

The protein belongs to the gamma-glutamyl phosphate reductase family.

Its subcellular location is the cytoplasm. The catalysed reaction is L-glutamate 5-semialdehyde + phosphate + NADP(+) = L-glutamyl 5-phosphate + NADPH + H(+). Its pathway is amino-acid biosynthesis; L-proline biosynthesis; L-glutamate 5-semialdehyde from L-glutamate: step 2/2. In terms of biological role, catalyzes the NADPH-dependent reduction of L-glutamate 5-phosphate into L-glutamate 5-semialdehyde and phosphate. The product spontaneously undergoes cyclization to form 1-pyrroline-5-carboxylate. This chain is Gamma-glutamyl phosphate reductase, found in Vibrio vulnificus (strain CMCP6).